The chain runs to 526 residues: Type 2 glycosyltransferase (526 aa).

A helical transmembrane segment spans residues Pro-25–Phe-45. 2 N-linked (GlcNAc...) asparagine glycosylation sites follow: Asn-298 and Asn-317. Helical transmembrane passes span Phe-340–Trp-360, Trp-375–Ile-395, and Phe-403–Ile-423. N-linked (GlcNAc...) asparagine glycosylation is found at Asn-426 and Asn-517.

It belongs to the GT2 glycosyltransferase family.

It localises to the cell membrane. The protein localises to the secreted. The protein resides in the cell wall. Functionally, glycosyltransferase involved in the maintenance of the outermost surface of the fungal cell wall. Likely functions in the synthesis of a currently unknown, potentially minor but widespread, extracellular or outer cell wall polysaccharide which plays a key role in facilitating many interactions between plants and fungi by enabling hyphal growth on solid matrices. This chain is Type 2 glycosyltransferase, found in Gibberella zeae (strain ATCC MYA-4620 / CBS 123657 / FGSC 9075 / NRRL 31084 / PH-1) (Wheat head blight fungus).